Consider the following 112-residue polypeptide: uncharacterized protein (112 aa).

This is an uncharacterized protein from Archaeoglobus fulgidus (strain ATCC 49558 / DSM 4304 / JCM 9628 / NBRC 100126 / VC-16).